The sequence spans 290 residues: Cilia- and flagella-associated protein 298 (290 aa).

Tyrosine 264 carries the phosphotyrosine modification.

Belongs to the CFAP298 family. In terms of assembly, interacts with ZMYND10.

It localises to the cytoplasm. The protein resides in the cytoskeleton. Its subcellular location is the cilium basal body. In terms of biological role, plays a role in motile cilium function, possibly by acting on outer dynein arm assembly. Seems to be important for initiation rather than maintenance of cilium motility. Required for correct positioning of the cilium at the apical cell surface, suggesting an additional role in the planar cell polarity (PCP) pathway. May suppress canonical Wnt signaling activity. The polypeptide is Cilia- and flagella-associated protein 298 (Homo sapiens (Human)).